A 101-amino-acid chain; its full sequence is Small ribosomal subunit protein uS14 (101 aa).

A disordered region spans residues R53–G72. The segment covering R61–P70 has biased composition (basic and acidic residues).

Belongs to the universal ribosomal protein uS14 family. As to quaternary structure, part of the 30S ribosomal subunit. Contacts proteins S3 and S10.

Functionally, binds 16S rRNA, required for the assembly of 30S particles and may also be responsible for determining the conformation of the 16S rRNA at the A site. The sequence is that of Small ribosomal subunit protein uS14 from Corynebacterium glutamicum (strain ATCC 13032 / DSM 20300 / JCM 1318 / BCRC 11384 / CCUG 27702 / LMG 3730 / NBRC 12168 / NCIMB 10025 / NRRL B-2784 / 534).